An 89-amino-acid chain; its full sequence is Small ribosomal subunit protein uS15 (89 aa).

It belongs to the universal ribosomal protein uS15 family. In terms of assembly, part of the 30S ribosomal subunit. Forms a bridge to the 50S subunit in the 70S ribosome, contacting the 23S rRNA.

One of the primary rRNA binding proteins, it binds directly to 16S rRNA where it helps nucleate assembly of the platform of the 30S subunit by binding and bridging several RNA helices of the 16S rRNA. Its function is as follows. Forms an intersubunit bridge (bridge B4) with the 23S rRNA of the 50S subunit in the ribosome. This chain is Small ribosomal subunit protein uS15, found in Buchnera aphidicola subsp. Acyrthosiphon pisum (strain 5A).